Reading from the N-terminus, the 427-residue chain is Vitamin D3 receptor (427 aa).

The nuclear receptor DNA-binding region spans 21–96 (PRICGVCGDR…IGMMKEFILT (76 aa)). 8 residues coordinate Zn(2+): Cys24, Cys27, Cys41, Cys44, Cys60, Cys66, Cys76, and Cys79. 2 NR C4-type zinc fingers span residues 24-44 (CGVCGDRATGFHFNAMTCEGC) and 60-79 (CPFNGDCRITKDNRRHCQAC). Positions 97–126 (DEEVQRKREMILKRKEEEALKDSLRPKLSE) are hinge. The NR LBD domain maps to 127-423 (EQQRIIAILL…LTPLVLEVFG (297 aa)). Residue Tyr143 coordinates calcitriol. The segment at 149 to 201 (DFGQFRPPVRGDEEEGTLPSRSSSAHAPSFSGSSSSSCSDQYTSSPDTMEPAS) is disordered. Residues 168-193 (SRSSSAHAPSFSGSSSSSCSDQYTSS) show a composition bias toward low complexity. Ser237 provides a ligand contact to calcitriol. Residues 246-264 (KMIPGFRDLTAEDQIVLLK) are interaction with coactivator LXXLL motif. Calcitriol-binding residues include Arg274, Ser278, His305, and His397. The 9aaTAD motif lies at 416–424 (PLVLEVFGN).

It belongs to the nuclear hormone receptor family. NR1 subfamily. In terms of assembly, homodimer in the absence of bound vitamin D3. Heterodimer with RXRA after vitamin D3 binding. Interacts with MED1, NCOA1, NCOA2, NCOA3 and NCOA6 coactivators, leading to a strong increase of transcription of target genes. Interacts with the corepressor NCOR1. Interacts with SNW1. Interacts with IRX4, the interaction does not affect its transactivation activity. Interacts with CRY1. Interacts with CRY2 in a ligand-dependent manner. In terms of processing, ubiquitinated by UBR5, leading to its degradation: UBR5 specifically recognizes and binds ligand-bound VDR when it is not associated with coactivators (NCOAs). In presence of NCOAs, the UBR5-degron is not accessible, preventing its ubiquitination and degradation.

Its subcellular location is the nucleus. It localises to the cytoplasm. Nuclear receptor for calcitriol, the active form of vitamin D3 which mediates the action of this vitamin on cells. Enters the nucleus upon vitamin D3 binding where it forms heterodimers with the retinoid X receptor/RXR. The VDR-RXR heterodimers bind to specific response elements on DNA and activate the transcription of vitamin D3-responsive target genes. Plays a central role in calcium homeostasis. Also functions as a receptor for the secondary bile acid lithocholic acid (LCA) and its metabolites. The polypeptide is Vitamin D3 receptor (VDR) (Sus scrofa (Pig)).